A 61-amino-acid polypeptide reads, in one-letter code: uncharacterized protein (61 aa).

Residues 34–61 adopt a coiled-coil conformation; the sequence is TDVEDIDRLISMLDDLEAKYERFKKDWE.

This is an uncharacterized protein from Bacillus subtilis (strain 168).